The following is an 824-amino-acid chain: Intraflagellar transport protein 88 homolog (824 aa).

The segment at 113–134 (FDPLSQSRGPASPLEAKKKDSP) is disordered. TPR repeat units follow at residues 197-230 (YSVL…KMFS), 233-266 (GILK…VPSV), 272-305 (IKIM…APNL), 307-338 (AGYN…PLEI), 415-448 (NDLE…DSRV), 450-483 (SAAA…DRYN), 484-517 (PAAL…DSSC), 518-551 (TEAL…LRNS), 552-585 (AEVL…IPTD), 586-619 (PQVL…FPCN), 620-653 (IEVI…QPTQ), and 654-687 (VKWQ…FPEN). Residues 724-824 (EQRIKSGRDG…EELGDDLLPE (101 aa)) form a disordered region. Residues 748–757 (DSGQNYSASS) are compositionally biased toward polar residues. Basic and acidic residues predominate over residues 797-808 (ERPKTAAKKRID). Over residues 809–824 (EDDFADEELGDDLLPE) the composition is skewed to acidic residues.

In terms of assembly, component of the IFT complex B, at least composed of IFT20, IFT22, IFT25, IFT27, IFT46, IFT52, TRAF3IP1/IFT54, IFT57, IFT74, IFT80, IFT81, and IFT88. Interacts with IFT20, IFT22, IFT25, IFT27, IFT52, TRAF3IP1, IFT74, IFT80 and IFT81. Interacts with IFT172. Interacts with IFT57. Interacts with IFT46. Interacts with IFT70B. Interacts with C2CD3. Interacts with ENTR1 (via N-terminus). Interacts with LRRC56. Interacts with DZIP1. Interacts with CCDC38. Interacts with CCDC146. Interacts with CFAP53. Expressed in the heart, brain, liver, lung, kidney, skeletal muscle and pancreas.

The protein resides in the cytoplasm. It is found in the cytoskeleton. It localises to the microtubule organizing center. The protein localises to the centrosome. Its subcellular location is the centriole. The protein resides in the cell projection. It is found in the cilium. It localises to the cilium basal body. The protein localises to the flagellum. Its function is as follows. Positively regulates primary cilium biogenesis. Also involved in autophagy since it is required for trafficking of ATG16L and the expansion of the autophagic compartment. The protein is Intraflagellar transport protein 88 homolog (IFT88) of Homo sapiens (Human).